Reading from the N-terminus, the 267-residue chain is Probable membrane transporter protein MJ0441 (267 aa).

7 consecutive transmembrane segments (helical) span residues 10-30 (LLLLPLLIIVGFIVGILGSLF), 31-51 (GIGGGFLVAPILTFIFDYFGI), 55-75 (VKFAVGTSLFVVFINSIISIF), 87-107 (ASITIGIISLVFSYFSGFLVV), 158-178 (FLSGLFGIGGGIVIIPILAMA), 185-205 (AVAISVGVIPLTSIGGLISYL), and 213-233 (IYNIGYVSIPIALIMAIPIIY).

Belongs to the 4-toluene sulfonate uptake permease (TSUP) (TC 2.A.102) family.

The protein resides in the cell membrane. The protein is Probable membrane transporter protein MJ0441 of Methanocaldococcus jannaschii (strain ATCC 43067 / DSM 2661 / JAL-1 / JCM 10045 / NBRC 100440) (Methanococcus jannaschii).